The chain runs to 380 residues: 1-deoxy-D-xylulose 5-phosphate reductoisomerase (380 aa).

Thr-10, Gly-11, Ser-12, Ile-13, Gly-36, Arg-37, Asn-38, and Asn-120 together coordinate NADPH. Lys-121 is a binding site for 1-deoxy-D-xylulose 5-phosphate. Glu-122 lines the NADPH pocket. Asp-146 contacts Mn(2+). Residues Ser-147, Glu-148, Ser-172, and His-195 each coordinate 1-deoxy-D-xylulose 5-phosphate. Position 148 (Glu-148) interacts with Mn(2+). Gly-201 is a binding site for NADPH. 1-deoxy-D-xylulose 5-phosphate is bound by residues Ser-208, Asn-213, Lys-214, and Glu-217. Residue Glu-217 coordinates Mn(2+).

Belongs to the DXR family. Mg(2+) serves as cofactor. It depends on Mn(2+) as a cofactor.

The catalysed reaction is 2-C-methyl-D-erythritol 4-phosphate + NADP(+) = 1-deoxy-D-xylulose 5-phosphate + NADPH + H(+). Its pathway is isoprenoid biosynthesis; isopentenyl diphosphate biosynthesis via DXP pathway; isopentenyl diphosphate from 1-deoxy-D-xylulose 5-phosphate: step 1/6. Its function is as follows. Catalyzes the NADPH-dependent rearrangement and reduction of 1-deoxy-D-xylulose-5-phosphate (DXP) to 2-C-methyl-D-erythritol 4-phosphate (MEP). This is 1-deoxy-D-xylulose 5-phosphate reductoisomerase from Listeria innocua serovar 6a (strain ATCC BAA-680 / CLIP 11262).